The chain runs to 950 residues: Leucine--tRNA ligase (950 aa).

Positions 42 to 52 (PYLNGNLHAGH) match the 'HIGH' region motif. The 'KMSKS' region motif lies at 629-633 (KMSKS). Lys-632 contributes to the ATP binding site. The segment at 928-950 (NPPYDPKGRAQNAEPGRPAIYIE) is disordered.

Belongs to the class-I aminoacyl-tRNA synthetase family.

It localises to the cytoplasm. The enzyme catalyses tRNA(Leu) + L-leucine + ATP = L-leucyl-tRNA(Leu) + AMP + diphosphate. The protein is Leucine--tRNA ligase of Methanothrix thermoacetophila (strain DSM 6194 / JCM 14653 / NBRC 101360 / PT) (Methanosaeta thermophila).